Here is a 267-residue protein sequence, read N- to C-terminus: MKVQTGATGVLERTSHYLKAGLLRTKPAWFDVVGAHPPSTNLTKKPKLFETGGQKSDPSESIFTKINGEYKTRTSVEDRKQKNNSVSRVPKLQFLEDQLRDVFYHQHPWEFSRPKVLVETSGDDNSKCDWSHMLQFNKPLDGESVVQRTLWLLNRSKMDGKSITLFDAYDEARFEFYRLRMEEEMSSAVSREESTMYGAVFPSPHLEHGVNQEQEYIDIWTKVAGDATKVKTASKDGKSSNGSMGAEDVVEKTTSAWETEFVEEESS.

The segment at 230 to 267 is disordered; sequence VKTASKDGKSSNGSMGAEDVVEKTTSAWETEFVEEESS.

The protein belongs to the mitochondrion-specific ribosomal protein mS23 family. As to quaternary structure, component of the mitochondrial small ribosomal subunit.

It localises to the mitochondrion. In Meyerozyma guilliermondii (strain ATCC 6260 / CBS 566 / DSM 6381 / JCM 1539 / NBRC 10279 / NRRL Y-324) (Yeast), this protein is Small ribosomal subunit protein mS23 (RSM25).